We begin with the raw amino-acid sequence, 547 residues long: Chaperonin GroEL 2 (547 aa).

ATP is bound by residues 29–32 (TLGP), 86–90 (DGTTT), glycine 418, 482–484 (NAA), and aspartate 498.

The protein belongs to the chaperonin (HSP60) family. In terms of assembly, forms a cylinder of 14 subunits composed of two heptameric rings stacked back-to-back. Interacts with the co-chaperonin GroES.

Its subcellular location is the cytoplasm. The catalysed reaction is ATP + H2O + a folded polypeptide = ADP + phosphate + an unfolded polypeptide.. Functionally, together with its co-chaperonin GroES, plays an essential role in assisting protein folding. The GroEL-GroES system forms a nano-cage that allows encapsulation of the non-native substrate proteins and provides a physical environment optimized to promote and accelerate protein folding. The protein is Chaperonin GroEL 2 of Corynebacterium efficiens (strain DSM 44549 / YS-314 / AJ 12310 / JCM 11189 / NBRC 100395).